We begin with the raw amino-acid sequence, 179 residues long: Replication restart protein DnaT (179 aa).

Over residues 151–168 the composition is skewed to polar residues; that stretch reads SRSSNGGMPQRDINSVSE. The interval 151 to 179 is disordered; the sequence is SRSSNGGMPQRDINSVSEPDNHIPPGFRG.

The protein belongs to the DnaT family. In terms of assembly, homooligomerizes. Interacts with PriB. Component of the replication restart primosome. Primosome assembly occurs via a 'hand-off' mechanism. PriA binds to replication forks, subsequently PriB then DnaT bind; DnaT then displaces ssDNA to generate the helicase loading substrate.

In terms of biological role, involved in the restart of stalled replication forks, which reloads the replicative helicase on sites other than the origin of replication. Can function in multiple replication restart pathways. Displaces ssDNA from a PriB-ssDNA complex. Probably forms a spiral filament on ssDNA. The sequence is that of Replication restart protein DnaT from Salmonella heidelberg (strain SL476).